Consider the following 157-residue polypeptide: Neutrophil recruitment protein (157 aa).

Positions 1 to 19 (MCSIWLTFFLSFLILNTKA) are cleaved as a signal peptide.

Belongs to the PBP/GOBP family. Interacts with mouse TLR1; the interaction promotes activation of canonical NF-kappa-B signaling in host macrophages. Interacts with human TLR1. Interacts with mouse TLR4; the interaction promotes activation of canonical NF-kappa-B signaling in host macrophages. Interacts with human TLR4. In terms of tissue distribution, female salivary gland (at protein level).

The protein localises to the secreted. Functionally, activates MyD88-dependent canonical NF-kappa-B signaling in host macrophages via interaction with host TLR1 and TLR4; this drives the expression of neutrophil chemoattractants, followed by the subsequent influx of neutrophils and recruitment of myeloid cells at the bite site. Its function is as follows. (Microbial infection) Promotes Zika virus infection in mouse model by facilitating recruitment of flavivirus-permissive myeloid cells at the bite site. (Microbial infection) Promotes dengue virus infection in mouse model by facilitating recruitment of flavivirus-permissive myeloid cells at the bite site. The protein is Neutrophil recruitment protein of Aedes aegypti (Yellowfever mosquito).